A 316-amino-acid chain; its full sequence is D-alanine--D-alanine ligase (316 aa).

In terms of domain architecture, ATP-grasp spans 129–316 (KYILQAAGIP…ALQAEFCRYP (188 aa)). 162–217 (EGSLLYPMFIKPANMGSSVGITKAENREELQNALQEAYRYDTRAIVEQGIEAREIE) provides a ligand contact to ATP. The Mg(2+) site is built by Asp-288, Glu-301, and Asn-303.

This sequence belongs to the D-alanine--D-alanine ligase family. The cofactor is Mg(2+). It depends on Mn(2+) as a cofactor.

Its subcellular location is the cytoplasm. It carries out the reaction 2 D-alanine + ATP = D-alanyl-D-alanine + ADP + phosphate + H(+). It functions in the pathway cell wall biogenesis; peptidoglycan biosynthesis. Cell wall formation. The chain is D-alanine--D-alanine ligase (ddl) from Enterococcus gallinarum.